A 388-amino-acid polypeptide reads, in one-letter code: Nuclear hormone receptor family member nhr-16 (388 aa).

The segment at residues 11–86 is a DNA-binding region (nuclear receptor); that stretch reads FLKCAICQES…VGMNPAGVQQ (76 aa). 2 NR C4-type zinc fingers span residues 14-34 and 50-74; these read CAICQESAEGFHFGAEACRAC and CQGNNDCDVTINIRCMCRACRYIKC. The NR LBD domain maps to 115-387; it reads PPSSLMLHIP…DEFYNLMSGR (273 aa).

The protein belongs to the nuclear hormone receptor family.

It localises to the nucleus. Its function is as follows. Orphan nuclear receptor. The protein is Nuclear hormone receptor family member nhr-16 (nhr-16) of Caenorhabditis elegans.